The primary structure comprises 241 residues: Adapter protein MecA (241 aa).

A disordered region spans residues 115 to 141 (TDSNDKNNDDSSYMSDGNPADLNGYAN).

This sequence belongs to the MecA family. In terms of assembly, homodimer.

In terms of biological role, enables the recognition and targeting of unfolded and aggregated proteins to the ClpC protease or to other proteins involved in proteolysis. This is Adapter protein MecA from Pediococcus pentosaceus (strain ATCC 25745 / CCUG 21536 / LMG 10740 / 183-1w).